The chain runs to 235 residues: Caveolin-1 (235 aa).

At 1-161 the chain is on the cytoplasmic side; sequence MSTEQDIKTE…LVSLLALPFT (161 aa). A disordered region spans residues 29–72; sequence GEAVVAPEEPKPKKNWFTFGKKKAAPTDETNIEEGGAPGDEPVK. Residues 162-182 constitute an intramembrane region (helical); that stretch reads IIFAIFFGLLASINVFIIVPL. Residues 183–235 are Cytoplasmic-facing; sequence GKLLSIPGTLLAKLWNWLIHAIFDPIASAVGLIFSNFNIRKYGINQETTAPCV. C234 carries S-palmitoyl cysteine lipidation.

It belongs to the caveolin family. Homooligomer containing 14-16 monomers per oligomer.

It is found in the golgi apparatus membrane. The protein localises to the cell membrane. It localises to the membrane. Its subcellular location is the caveola. Its function is as follows. May act as a scaffolding protein within caveolar membranes. Interacts directly with G-protein alpha subunits and can functionally regulate their activity. The sequence is that of Caveolin-1 (cav-1) from Caenorhabditis elegans.